A 307-amino-acid chain; its full sequence is Aspartate carbamoyltransferase catalytic subunit (307 aa).

The carbamoyl phosphate site is built by arginine 58 and threonine 59. Residue lysine 86 participates in L-aspartate binding. Positions 108, 136, and 139 each coordinate carbamoyl phosphate. The L-aspartate site is built by arginine 169 and arginine 223. Residues glycine 264 and proline 265 each coordinate carbamoyl phosphate.

Belongs to the aspartate/ornithine carbamoyltransferase superfamily. ATCase family. As to quaternary structure, heterododecamer (2C3:3R2) of six catalytic PyrB chains organized as two trimers (C3), and six regulatory PyrI chains organized as three dimers (R2).

The catalysed reaction is carbamoyl phosphate + L-aspartate = N-carbamoyl-L-aspartate + phosphate + H(+). The protein operates within pyrimidine metabolism; UMP biosynthesis via de novo pathway; (S)-dihydroorotate from bicarbonate: step 2/3. Functionally, catalyzes the condensation of carbamoyl phosphate and aspartate to form carbamoyl aspartate and inorganic phosphate, the committed step in the de novo pyrimidine nucleotide biosynthesis pathway. The protein is Aspartate carbamoyltransferase catalytic subunit of Syntrophus aciditrophicus (strain SB).